A 510-amino-acid chain; its full sequence is NAD(P)H-quinone oxidoreductase subunit 2 B, chloroplastic (510 aa).

Transmembrane regions (helical) follow at residues 26-46 (LFDG…ILLL), 57-77 (IPWF…ALLF), 99-119 (IFQF…VEYI), 124-144 (MAIT…MFLC), 149-169 (LITI…LSGY), 183-203 (YLLM…WLYG), 227-247 (PGIS…LSPA), 295-315 (WHPL…LIAI), 323-342 (MLAY…IIVG), 354-374 (YMLF…LFGL), 395-415 (ALSL…AGFF), 418-438 (LHLF…IGLF), and 484-504 (MIVC…IIAI).

The protein belongs to the complex I subunit 2 family. In terms of assembly, NDH is composed of at least 16 different subunits, 5 of which are encoded in the nucleus.

It is found in the plastid. Its subcellular location is the chloroplast thylakoid membrane. The catalysed reaction is a plastoquinone + NADH + (n+1) H(+)(in) = a plastoquinol + NAD(+) + n H(+)(out). It catalyses the reaction a plastoquinone + NADPH + (n+1) H(+)(in) = a plastoquinol + NADP(+) + n H(+)(out). Functionally, NDH shuttles electrons from NAD(P)H:plastoquinone, via FMN and iron-sulfur (Fe-S) centers, to quinones in the photosynthetic chain and possibly in a chloroplast respiratory chain. The immediate electron acceptor for the enzyme in this species is believed to be plastoquinone. Couples the redox reaction to proton translocation, and thus conserves the redox energy in a proton gradient. The polypeptide is NAD(P)H-quinone oxidoreductase subunit 2 B, chloroplastic (Oenothera argillicola (Appalachian evening primrose)).